We begin with the raw amino-acid sequence, 204 residues long: Ras-related protein RabL (204 aa).

14 to 21 (GDSNVGKT) is a GTP binding site. Residues 36–44 (RPPSIGPDY) carry the Effector region motif. GTP is bound by residues 62–66 (DTCGQ) and 120–123 (TKSD). S-geranylgeranyl cysteine attachment occurs at residues Cys-203 and Cys-204.

The protein belongs to the small GTPase superfamily. Rab family.

Its subcellular location is the cell membrane. The protein is Ras-related protein RabL (rabL) of Dictyostelium discoideum (Social amoeba).